The following is a 476-amino-acid chain: MAPKQIRTIGQVSQYVCLLSKPVSPVSGQVRQFTSPVDASIPASKQKFVPSSGTYPKGFKVSGSHAGVKASNTSAPDLALVWSEEPCSAAAVFTTNKFQAAPVQVSSELIRKRNGNGIRGVIVNAGCANAVTGKKGLQDARSMSKKADECNGLKEEDSSTLVMSTGVIGQLLPIERILNKVPEAQSNLASTHAAWLRTARAICTTDTFPKLTSRSFSLPSSPDRTYSIAGMTKGAGMIHPNMATLLGIICTDAPIEAPVLQSLLSHSISRSFNSISVDGDTSTNDTVAILANGAAGGTPISSTGSKDYTAMQSILTQFTQSLAQLVVRDGEGATKFVTVRVKNSPSYTDAKCIASTIARSPLVKTALYGKDANWGRILCAVGYTPDLTPGTVVPERTSVSFKPADGSAELKLLVNGEPESVDEGRASSILQHEDLEIVVDLGGGASGEAGRGGEDAIYWFCDFSHEYVTINGDYRT.

Residues Thr-204, Lys-233, Thr-244, Glu-331, Asn-471, and Thr-476 each contribute to the substrate site. Catalysis depends on Thr-244, which acts as the Nucleophile.

It belongs to the ArgJ family. As to quaternary structure, heterodimer of an alpha and a beta chain. Post-translationally, the alpha and beta chains are autoproteolytically processed from a single precursor protein within the mitochondrion.

It is found in the mitochondrion matrix. It carries out the reaction N(2)-acetyl-L-ornithine + L-glutamate = N-acetyl-L-glutamate + L-ornithine. The enzyme catalyses L-glutamate + acetyl-CoA = N-acetyl-L-glutamate + CoA + H(+). It participates in amino-acid biosynthesis; L-arginine biosynthesis; L-ornithine and N-acetyl-L-glutamate from L-glutamate and N(2)-acetyl-L-ornithine (cyclic): step 1/1. It functions in the pathway amino-acid biosynthesis; L-arginine biosynthesis; N(2)-acetyl-L-ornithine from L-glutamate: step 1/4. Functionally, catalyzes two activities which are involved in the cyclic version of arginine biosynthesis: the synthesis of acetylglutamate from glutamate and acetyl-CoA, and of ornithine by transacetylation between acetylornithine and glutamate. This chain is Arginine biosynthesis bifunctional protein ArgJ, mitochondrial, found in Arthroderma otae (strain ATCC MYA-4605 / CBS 113480) (Microsporum canis).